Reading from the N-terminus, the 294-residue chain is N-acetylmuramic acid 6-phosphate etherase (294 aa).

One can recognise an SIS domain in the interval 54 to 217 (VIKSFEEEGR…STASMIGVGK (164 aa)). The Proton donor role is filled by E82. E113 is an active-site residue.

It belongs to the GCKR-like family. MurNAc-6-P etherase subfamily. Homodimer.

It carries out the reaction N-acetyl-D-muramate 6-phosphate + H2O = N-acetyl-D-glucosamine 6-phosphate + (R)-lactate. It participates in amino-sugar metabolism; N-acetylmuramate degradation. Its function is as follows. Specifically catalyzes the cleavage of the D-lactyl ether substituent of MurNAc 6-phosphate, producing GlcNAc 6-phosphate and D-lactate. The protein is N-acetylmuramic acid 6-phosphate etherase of Bacillus cereus (strain AH187).